A 218-amino-acid chain; its full sequence is Serine/threonine-protein phosphatase 2 (218 aa).

4 residues coordinate Mn(2+): Asp22, His24, Asp51, and Asn77. The active-site Proton donor is His78. His187 is a Mn(2+) binding site.

It belongs to the PPP phosphatase family. Requires Mn(2+) as cofactor.

It carries out the reaction O-phospho-L-seryl-[protein] + H2O = L-seryl-[protein] + phosphate. The enzyme catalyses O-phospho-L-threonyl-[protein] + H2O = L-threonyl-[protein] + phosphate. Has been shown, in vitro, to act on Ser, Thr and Tyr-phosphorylated substrates. The protein is Serine/threonine-protein phosphatase 2 (pphB) of Escherichia coli (strain K12).